Consider the following 111-residue polypeptide: Cyclin-dependent protein kinase inhibitor SMR2 (111 aa).

Positions 1–66 are disordered; that stretch reads MSKLLETLEE…PPPRKRPREI (66 aa). Basic and acidic residues predominate over residues 10 to 35; it reads EEKTVEQKPRSQEEEDHQDSSKKEEL.

Interacts with CYCD2-1. Interacts with CDKB1-1. As to expression, expressed at low levels in roots and stems. Expressed in the root vascular tissue.

The protein resides in the nucleus. In terms of biological role, cyclin-dependent protein kinase (CDK) inhibitor that restricts cell proliferation and cooperates with SIM and SMR1 to promote endoreplication during leaf development. This chain is Cyclin-dependent protein kinase inhibitor SMR2, found in Arabidopsis thaliana (Mouse-ear cress).